The chain runs to 766 residues: Lanosterol synthase ERG7 (766 aa).

The interval 1 to 47 (MVANSTGRDASALKSRKRAADSESEPLLKQGQPFPKQPRIGSELDKT) is disordered. A PFTB 1 repeat occupies 148–190 (ATAIYNYISARAHPEDGGWGLHIEGESSVFGTLMNYVALRLVG). D482 acts as the Proton donor in catalysis. PFTB repeat units lie at residues 586 to 626 (IRTA…KHIG) and 635 to 676 (SRRG…VVQT).

Belongs to the terpene cyclase/mutase family.

The protein localises to the lipid droplet. It localises to the endoplasmic reticulum membrane. The enzyme catalyses (S)-2,3-epoxysqualene = lanosterol. The protein operates within terpene metabolism; lanosterol biosynthesis; lanosterol from farnesyl diphosphate: step 3/3. Its pathway is steroid metabolism; ergosterol biosynthesis. In terms of biological role, lanosterol synthase; part of the third module of ergosterol biosynthesis pathway that includes the late steps of the pathway. ERG7 catalyzes the cyclization of (S)-2,3 oxidosqualene to lanosterol, a reaction that forms the sterol core. The third module or late pathway involves the ergosterol synthesis itself through consecutive reactions that mainly occur in the endoplasmic reticulum (ER) membrane. Firstly, the squalene synthase ERG9 catalyzes the condensation of 2 farnesyl pyrophosphate moieties to form squalene, which is the precursor of all steroids. Squalene synthase is crucial for balancing the incorporation of farnesyl diphosphate (FPP) into sterol and nonsterol isoprene synthesis. Secondly, squalene is converted into lanosterol by the consecutive action of the squalene epoxidase ERG1 and the lanosterol synthase ERG7. Then, the delta(24)-sterol C-methyltransferase ERG6 methylates lanosterol at C-24 to produce eburicol. Eburicol is the substrate of the sterol 14-alpha demethylase encoded by CYP51A, CYP51B and CYP51C, to yield 4,4,24-trimethyl ergosta-8,14,24(28)-trienol. CYP51B encodes the enzyme primarily responsible for sterol 14-alpha-demethylation, and plays an essential role in ascospore formation. CYP51A encodes an additional sterol 14-alpha-demethylase, induced on ergosterol depletion and responsible for the intrinsic variation in azole sensitivity. The third CYP51 isoform, CYP51C, does not encode a sterol 14-alpha-demethylase, but is required for full virulence on host wheat ears. The C-14 reductase ERG24 then reduces the C14=C15 double bond which leads to 4,4-dimethylfecosterol. A sequence of further demethylations at C-4, involving the C-4 demethylation complex containing the C-4 methylsterol oxidases ERG25, the sterol-4-alpha-carboxylate 3-dehydrogenase ERG26 and the 3-keto-steroid reductase ERG27, leads to the production of fecosterol via 4-methylfecosterol. ERG28 has a role as a scaffold to help anchor ERG25, ERG26 and ERG27 to the endoplasmic reticulum. The C-8 sterol isomerase ERG2 then catalyzes the reaction which results in unsaturation at C-7 in the B ring of sterols and thus converts fecosterol to episterol. The sterol-C5-desaturases ERG3A and ERG3BB then catalyze the introduction of a C-5 double bond in the B ring to produce 5-dehydroepisterol. The C-22 sterol desaturases ERG5A and ERG5B further convert 5-dehydroepisterol into ergosta-5,7,22,24(28)-tetraen-3beta-ol by forming the C-22(23) double bond in the sterol side chain. Finally, ergosta-5,7,22,24(28)-tetraen-3beta-ol is substrate of the C-24(28) sterol reductase ERG4 to produce ergosterol. This chain is Lanosterol synthase ERG7, found in Gibberella zeae (strain ATCC MYA-4620 / CBS 123657 / FGSC 9075 / NRRL 31084 / PH-1) (Wheat head blight fungus).